The chain runs to 306 residues: Glutaminase (306 aa).

7 residues coordinate substrate: Ser-64, Asn-115, Glu-159, Asn-166, Tyr-190, Tyr-242, and Val-260.

It belongs to the glutaminase family. As to quaternary structure, homotetramer.

The enzyme catalyses L-glutamine + H2O = L-glutamate + NH4(+). This is Glutaminase from Vibrio vulnificus (strain YJ016).